The sequence spans 402 residues: Renin (402 aa).

Positions 1-26 are cleaved as a signal peptide; that stretch reads MGGRRMPLWALLLLWTSCSFSLPTDT. The propeptide at 27–64 is activation peptide; the sequence is ASFGRILLKKMPSVREILEERGVDMTRISAEWGEFIKK. Asparagine 69 carries N-linked (GlcNAc...) asparagine glycosylation. Residues 84–399 form the Peptidase A1 domain; it reads YYGEIGIGTP…DRHNNRIGFA (316 aa). Aspartate 102 is a catalytic residue. Cysteine 115 and cysteine 122 form a disulfide bridge. Asparagine 139 carries an N-linked (GlcNAc...) asparagine glycan. Cysteines 278 and 282 form a disulfide. Aspartate 287 is an active-site residue. A glycan (N-linked (GlcNAc...) asparagine) is linked at asparagine 320. Residues cysteine 321 and cysteine 358 are joined by a disulfide bond.

This sequence belongs to the peptidase A1 family. As to quaternary structure, interacts with ATP6AP2.

Its subcellular location is the secreted. It is found in the membrane. The catalysed reaction is Cleavage of Leu-|-Xaa bond in angiotensinogen to generate angiotensin I.. Its activity is regulated as follows. Interaction with ATP6AP2 results in a 5-fold increased efficiency in angiotensinogen processing. Renin is a highly specific endopeptidase, whose only known function is to generate angiotensin I from angiotensinogen in the plasma, initiating a cascade of reactions that produce an elevation of blood pressure and increased sodium retention by the kidney. This Rattus norvegicus (Rat) protein is Renin (Ren1).